The chain runs to 285 residues: 1,4-dihydroxy-2-naphthoyl-CoA synthase (285 aa).

Substrate-binding positions include arginine 45, 84–89, tyrosine 97, 129–133, threonine 155, serine 161, tyrosine 258, and lysine 273; these read SGGDQK and YSIGG. 154 to 156 lines the hydrogencarbonate pocket; sequence QTG.

The protein belongs to the enoyl-CoA hydratase/isomerase family. MenB subfamily. In terms of assembly, homohexamer. Dimer of a homotrimer. Hydrogencarbonate serves as cofactor.

The catalysed reaction is 2-succinylbenzoyl-CoA + H(+) = 1,4-dihydroxy-2-naphthoyl-CoA + H2O. The protein operates within quinol/quinone metabolism; 1,4-dihydroxy-2-naphthoate biosynthesis; 1,4-dihydroxy-2-naphthoate from chorismate: step 6/7. It functions in the pathway quinol/quinone metabolism; menaquinone biosynthesis. Its activity is regulated as follows. Inhibited by sulfite and nitrate. In terms of biological role, converts o-succinylbenzoyl-CoA (OSB-CoA) to 1,4-dihydroxy-2-naphthoyl-CoA (DHNA-CoA). This chain is 1,4-dihydroxy-2-naphthoyl-CoA synthase, found in Escherichia coli (strain K12).